Reading from the N-terminus, the 541-residue chain is Copper transport protein CutJ (541 aa).

A signal peptide spans 1 to 25 (MKRNRWWIILLLFLVFLPKTSFAHA). Residues His24 and His110 each contribute to the Cu cation site. Transmembrane regions (helical) follow at residues 146 to 166 (AILYTALSLFIGTVFFHLFWY), 180 to 200 (ILTGSIAALGLALLLQLPIQT), 228 to 248 (SIWIIQAALFVLLALSVIPAI), 262 to 282 (PLIFFFGLLLAKAFTGHAAVV), 293 to 313 (FLHLTSASIWVGGIAALVLLL), 335 to 355 (WALTAVGVILFSGLLNGFFII), 370 to 390 (LLVKSGLFVFMLVLGAIHFLL), and 407 to 427 (WAIGIAVLITAAVFTSLPSPP).

The protein in the N-terminal section; belongs to the CopC family. In the C-terminal section; belongs to the CopD family.

The protein localises to the cell membrane. Functionally, involved in uptake of extracellular oxidized copper under copper-limiting conditions. In Bacillus subtilis (strain 168), this protein is Copper transport protein CutJ.